Consider the following 343-residue polypeptide: Small ribosomal subunit biogenesis GTPase RsgA (343 aa).

The CP-type G domain occupies arginine 116–phenylalanine 275. GTP contacts are provided by residues asparagine 163–aspartate 166 and glycine 217–serine 225. Positions 299, 304, 306, and 312 each coordinate Zn(2+).

This sequence belongs to the TRAFAC class YlqF/YawG GTPase family. RsgA subfamily. In terms of assembly, monomer. Associates with 30S ribosomal subunit, binds 16S rRNA. The cofactor is Zn(2+).

It is found in the cytoplasm. Functionally, one of several proteins that assist in the late maturation steps of the functional core of the 30S ribosomal subunit. Helps release RbfA from mature subunits. May play a role in the assembly of ribosomal proteins into the subunit. Circularly permuted GTPase that catalyzes slow GTP hydrolysis, GTPase activity is stimulated by the 30S ribosomal subunit. The protein is Small ribosomal subunit biogenesis GTPase RsgA of Azotobacter vinelandii (strain DJ / ATCC BAA-1303).